The chain runs to 22 residues: MICOS complex subunit MIC60 (22 aa).

The protein belongs to the MICOS complex subunit Mic60 family. In terms of assembly, component of the mitochondrial contact site and cristae organizing system (MICOS) complex, composed of at least MICOS10/MIC10, CHCHD3/MIC19, CHCHD6/MIC25, APOOL/MIC27, IMMT/MIC60, APOO/MIC23/MIC26 and MICOS13/MIC13. This complex was also known under the names MINOS or MitOS complex. The MICOS complex associates with mitochondrial outer membrane proteins SAMM50, MTX1 and MTX2 (together described as components of the mitochondrial outer membrane sorting assembly machinery (SAM) complex) and DNAJC11, mitochondrial inner membrane protein TMEM11 and with HSPA9. The MICOS and SAM complexes together with DNAJC11 are part of a large protein complex spanning both membranes termed the mitochondrial intermembrane space bridging (MIB) complex. Interacts with HSPA1A/HSPA1B and OPA1, preferentially with the soluble OPA1 form. Interacts with MICOS13/MIC13, MICOS10/MIC10, CHCHD3/MIC19, CHCHD6/MIC25, SAMM50 and TMEM11. Interacts with APOO/MIC23/MIC26 and APOOL/MIC27. Interacts with ARMC1. Interacts with ARMC12.

Its subcellular location is the mitochondrion inner membrane. The protein resides in the mitochondrion. Functionally, component of the MICOS complex, a large protein complex of the mitochondrial inner membrane that plays crucial roles in the maintenance of crista junctions, inner membrane architecture, and formation of contact sites to the outer membrane. Plays an important role in the maintenance of the MICOS complex stability and the mitochondrial cristae morphology. The protein is MICOS complex subunit MIC60 of Mesocricetus auratus (Golden hamster).